Here is a 130-residue protein sequence, read N- to C-terminus: Ribosome-binding factor A (130 aa).

This sequence belongs to the RbfA family. Monomer. Binds 30S ribosomal subunits, but not 50S ribosomal subunits or 70S ribosomes.

The protein localises to the cytoplasm. In terms of biological role, one of several proteins that assist in the late maturation steps of the functional core of the 30S ribosomal subunit. Associates with free 30S ribosomal subunits (but not with 30S subunits that are part of 70S ribosomes or polysomes). Required for efficient processing of 16S rRNA. May interact with the 5'-terminal helix region of 16S rRNA. The chain is Ribosome-binding factor A from Methylibium petroleiphilum (strain ATCC BAA-1232 / LMG 22953 / PM1).